Here is a 439-residue protein sequence, read N- to C-terminus: D-inositol 3-phosphate glycosyltransferase (439 aa).

A 1D-myo-inositol 3-phosphate-binding site is contributed by H21. UDP-N-acetyl-alpha-D-glucosamine-binding positions include 27 to 28 (QP) and G35. 1D-myo-inositol 3-phosphate contacts are provided by residues 32-37 (DAGGMN), K90, Y123, T147, and R167. 3 residues coordinate UDP-N-acetyl-alpha-D-glucosamine: R241, K246, and Q299. Residues Y308, R309, and A311 each contribute to the Mg(2+) site. Residues E321 and E329 each coordinate UDP-N-acetyl-alpha-D-glucosamine. T335 lines the Mg(2+) pocket.

It belongs to the glycosyltransferase group 1 family. MshA subfamily. In terms of assembly, homodimer.

It catalyses the reaction 1D-myo-inositol 3-phosphate + UDP-N-acetyl-alpha-D-glucosamine = 1D-myo-inositol 2-acetamido-2-deoxy-alpha-D-glucopyranoside 3-phosphate + UDP + H(+). Its function is as follows. Catalyzes the transfer of a N-acetyl-glucosamine moiety to 1D-myo-inositol 3-phosphate to produce 1D-myo-inositol 2-acetamido-2-deoxy-glucopyranoside 3-phosphate in the mycothiol biosynthesis pathway. In Mycobacterium sp. (strain KMS), this protein is D-inositol 3-phosphate glycosyltransferase.